The chain runs to 102 residues: Putative peripheral benzodiazepine receptor-related protein (102 aa).

As to expression, ubiquitous.

This chain is Putative peripheral benzodiazepine receptor-related protein (TSPO), found in Homo sapiens (Human).